A 243-amino-acid polypeptide reads, in one-letter code: Probable transcriptional regulatory protein BP2308 (243 aa).

The segment at 1 to 21 (MAGHSKWANIQHRKGRQDAKR) is disordered.

It belongs to the TACO1 family.

The protein resides in the cytoplasm. The polypeptide is Probable transcriptional regulatory protein BP2308 (Bordetella pertussis (strain Tohama I / ATCC BAA-589 / NCTC 13251)).